A 361-amino-acid chain; its full sequence is 3-dehydroquinate synthase (361 aa).

NAD(+) contacts are provided by residues 72–77 (SGEKEK), 130–131 (TT), lysine 142, and lysine 151. 3 residues coordinate Zn(2+): glutamate 184, histidine 247, and histidine 264.

It belongs to the sugar phosphate cyclases superfamily. Dehydroquinate synthase family. Co(2+) is required as a cofactor. The cofactor is Zn(2+). It depends on NAD(+) as a cofactor.

Its subcellular location is the cytoplasm. It carries out the reaction 7-phospho-2-dehydro-3-deoxy-D-arabino-heptonate = 3-dehydroquinate + phosphate. It participates in metabolic intermediate biosynthesis; chorismate biosynthesis; chorismate from D-erythrose 4-phosphate and phosphoenolpyruvate: step 2/7. Functionally, catalyzes the conversion of 3-deoxy-D-arabino-heptulosonate 7-phosphate (DAHP) to dehydroquinate (DHQ). The polypeptide is 3-dehydroquinate synthase (Bacillus cereus (strain G9842)).